Here is a 395-residue protein sequence, read N- to C-terminus: Vomeronasal type-1 receptor 2 (395 aa).

The chain crosses the membrane as a helical span at residues 12-32; sequence LYPINISAAWHLGPLPVSCFV. Topologically, residues 33-51 are extracellular; that stretch reads SNKYQCSLAFGATTGLRVL. A helical membrane pass occupies residues 52 to 72; the sequence is VVVVPQTQLSFLSSLCLVSLF. Over 73-93 the chain is Cytoplasmic; sequence LHSLVSAHGEKPTKPVGLDPT. The helical transmembrane segment at 94-114 threads the bilayer; it reads LFQVVVGILGNFSLLYYYMFL. Over 115-170 the chain is Extracellular; that stretch reads YFRGYKPRSTDLILRHLTVADSLVILSKRIPETMATFGLKHFDNYFGCKFLLYAHR. A helical membrane pass occupies residues 171 to 191; the sequence is VGRGVSIGSTCLLSVFQVITI. Residues 192–208 lie on the Cytoplasmic side of the membrane; that stretch reads NPRNSRWAEMKVKAPTY. Residues 209–229 form a helical membrane-spanning segment; the sequence is IGLSNILCWAFHMLVNAIFPI. At 230–267 the chain is on the extracellular side; that stretch reads YTTGKWSNNNITKKGDLGYCSAPLSDEVTKSVYAALTS. Asn239 is a glycosylation site (N-linked (GlcNAc...) asparagine). The helical transmembrane segment at 268-288 threads the bilayer; it reads FHDVLCLGLMLWASSSIVLVL. Residues 289–316 lie on the Cytoplasmic side of the membrane; the sequence is YRHKQQVQHICRNNLYPNSSPGNRAIQS. The chain crosses the membrane as a helical span at residues 317 to 337; the sequence is ILALVSTFALCYALSFITYVY. Over 338 to 346 the chain is Extracellular; the sequence is LALFDNSSW. N-linked (GlcNAc...) asparagine glycosylation occurs at Asn343. The helical transmembrane segment at 347-367 threads the bilayer; the sequence is WLVNTAALIIACFPTISPFVL. Over 368–395 the chain is Cytoplasmic; the sequence is MCRDPSRSRLCSICCRRNRRFFHDFRKM.

Belongs to the G-protein coupled receptor 1 family.

The protein localises to the cell membrane. In terms of biological role, putative pheromone receptor. This chain is Vomeronasal type-1 receptor 2 (VN1R2), found in Homo sapiens (Human).